A 116-amino-acid chain; its full sequence is Type IV narrow pilus major component PilA5 (116 aa).

Residues 1 to 5 (MRAKG) constitute a propeptide, leader sequence. F6 is modified (N-methylphenylalanine). A helical membrane pass occupies residues 6-26 (FTLIELAIVIVIIGILVAIAV).

Glycosylated.

The protein resides in the cell inner membrane. Its subcellular location is the cell outer membrane. The protein localises to the periplasm. In terms of biological role, plays an essential role in forming the main structure of the narrow T4P pili that participates in twitching motility. This is Type IV narrow pilus major component PilA5 (pilA5) from Thermus thermophilus (strain ATCC BAA-163 / DSM 7039 / HB27).